The chain runs to 271 residues: Shikimate dehydrogenase (NADP(+)) (271 aa).

Shikimate contacts are provided by residues 14-16 and Thr61; that span reads SLS. The active-site Proton acceptor is Lys65. Asn86 and Asp101 together coordinate shikimate. NADP(+)-binding positions include 125–129 and Ile212; that span reads GAGGA. Tyr214 is a binding site for shikimate. Gly235 is an NADP(+) binding site.

Belongs to the shikimate dehydrogenase family. Homodimer.

It carries out the reaction shikimate + NADP(+) = 3-dehydroshikimate + NADPH + H(+). It participates in metabolic intermediate biosynthesis; chorismate biosynthesis; chorismate from D-erythrose 4-phosphate and phosphoenolpyruvate: step 4/7. Involved in the biosynthesis of the chorismate, which leads to the biosynthesis of aromatic amino acids. Catalyzes the reversible NADPH linked reduction of 3-dehydroshikimate (DHSA) to yield shikimate (SA). This chain is Shikimate dehydrogenase (NADP(+)), found in Clostridium perfringens (strain 13 / Type A).